We begin with the raw amino-acid sequence, 263 residues long: uncharacterized protein (263 aa).

ATP is bound at residue 16–23; that stretch reads AKGGTGKT.

This sequence to M.jannaschii MJ0547 and MJ0169.

This is an uncharacterized protein from Methanocaldococcus jannaschii (strain ATCC 43067 / DSM 2661 / JAL-1 / JCM 10045 / NBRC 100440) (Methanococcus jannaschii).